The sequence spans 322 residues: Myeloid-associated differentiation marker (322 aa).

Residues 1–25 (MPVTVTRTTITTTTTSSSGQGSPTI) are disordered. S22 carries the post-translational modification Phosphoserine. 2 MARVEL domains span residues 31-163 (ALTQ…ARPG) and 168-319 (YMAT…HLVF). 8 helical membrane-spanning segments follow: residues 41–61 (LLQLVSTCVAFSLVASVGAWT), 70–90 (FTWCFCFSVTLIILIVELCGL), 101–121 (FPITFACYAALFCLSASIIYP), 137–157 (AIAATFFSCIACVAYATEVAW), 171–191 (TVPGLLKVLETFVACIIFAFI), 203–223 (LEWCVAVYAICFILAAIAILL), 239–259 (FLSGLALLSVLLYATALVLWP), and 294–314 (LAVAILTAINLLAYVADLVHS).

This sequence belongs to the MAL family.

It localises to the membrane. This is Myeloid-associated differentiation marker (MYADM) from Pongo abelii (Sumatran orangutan).